The chain runs to 462 residues: Cysteine--tRNA ligase (462 aa).

C27 lines the Zn(2+) pocket. The short motif at 29 to 39 (PTVYNYIHVGN) is the 'HIGH' region element. Residues C209, H234, and E238 each contribute to the Zn(2+) site. The short motif at 266 to 270 (KMSKS) is the 'KMSKS' region element. K269 provides a ligand contact to ATP.

Belongs to the class-I aminoacyl-tRNA synthetase family. In terms of assembly, monomer. The cofactor is Zn(2+).

It localises to the cytoplasm. It carries out the reaction tRNA(Cys) + L-cysteine + ATP = L-cysteinyl-tRNA(Cys) + AMP + diphosphate. This chain is Cysteine--tRNA ligase, found in Finegoldia magna (strain ATCC 29328 / DSM 20472 / WAL 2508) (Peptostreptococcus magnus).